Reading from the N-terminus, the 179-residue chain is Large ribosomal subunit protein uL5 (179 aa).

Belongs to the universal ribosomal protein uL5 family. In terms of assembly, part of the 50S ribosomal subunit; part of the 5S rRNA/L5/L18/L25 subcomplex. Contacts the 5S rRNA and the P site tRNA. Forms a bridge to the 30S subunit in the 70S ribosome.

Functionally, this is one of the proteins that bind and probably mediate the attachment of the 5S RNA into the large ribosomal subunit, where it forms part of the central protuberance. In the 70S ribosome it contacts protein S13 of the 30S subunit (bridge B1b), connecting the 2 subunits; this bridge is implicated in subunit movement. Contacts the P site tRNA; the 5S rRNA and some of its associated proteins might help stabilize positioning of ribosome-bound tRNAs. The protein is Large ribosomal subunit protein uL5 of Glaesserella parasuis serovar 5 (strain SH0165) (Haemophilus parasuis).